The following is a 902-amino-acid chain: Protein NrfI (902 aa).

Transmembrane regions (helical) follow at residues 9–29, 75–95, 300–320, 335–355, 602–622, 659–679, 731–751, 772–792, 832–852, and 868–888; these read YITL…ATFI, FLFH…RYLG, VTYL…LDPT, LSLL…YAQS, LVLG…PPLA, DTYE…LLFF, SYGF…LFIL, VSLI…GIWA, YLFS…YFGV, and LPIP…SLIA.

This sequence in the C-terminal section; belongs to the CcmF/CycK/Ccl1/NrfE/CcsA family.

The protein localises to the cell membrane. Functionally, may play a role in cytochrome c biogenesis and may be required for maturation of the NrfA protein. This Wolinella succinogenes (strain ATCC 29543 / DSM 1740 / CCUG 13145 / JCM 31913 / LMG 7466 / NCTC 11488 / FDC 602W) (Vibrio succinogenes) protein is Protein NrfI (nrfI).